We begin with the raw amino-acid sequence, 324 residues long: Muscleblind-like protein (324 aa).

2 consecutive C3H1-type zinc fingers follow at residues 38 to 66 (WLQV…HPPP) and 72 to 100 (QGRV…HPPQ).

Belongs to the muscleblind family. In terms of tissue distribution, expressed in neurons around the pharynx.

The protein resides in the nucleus. Its function is as follows. Binds to RNA with repeat sequences 5'-CUG-3' and 5'-CCUG-3'. This is Muscleblind-like protein (mbl-1) from Caenorhabditis elegans.